Here is a 242-residue protein sequence, read N- to C-terminus: Probable transcriptional regulatory protein Bxeno_A1185 (242 aa).

Belongs to the TACO1 family.

The protein localises to the cytoplasm. The sequence is that of Probable transcriptional regulatory protein Bxeno_A1185 from Paraburkholderia xenovorans (strain LB400).